The primary structure comprises 495 residues: Cytochrome P450 monooxygenase 88 (495 aa).

The helical transmembrane segment at 2-22 threads the bilayer; that stretch reads FLQIVTSVLATGLLYALISVL. N25 and N198 each carry an N-linked (GlcNAc...) asparagine glycan. C428 contacts heme.

It belongs to the cytochrome P450 family. Heme serves as cofactor.

The protein localises to the membrane. Its pathway is secondary metabolite biosynthesis. Its function is as follows. Cytochrome P450 monooxygenase that is able to use 4-ethoxybenzoic acid as a substrate for oxidation. The protein is Cytochrome P450 monooxygenase 88 of Postia placenta (strain ATCC 44394 / Madison 698-R) (Brown rot fungus).